The chain runs to 209 residues: Egg case collagen (209 aa).

Positions 1–129 are nonhelical region; the sequence is VYMSGXGKPP…YKGNHGFYLV (129 aa). Positions 130 to 209 are triple-helical region; it reads LPAGYPGTPG…DPGLPGEYGV (80 aa). The tract at residues 138–209 is disordered; the sequence is PGTPGPRGGP…DPGLPGEYGV (72 aa). The segment covering 142–162 has biased composition (gly residues); that stretch reads GPRGGPGDPGMPGEPGVGFPG.

Its function is as follows. Major component of the egg case wall which is secreted by the oviduct. The egg case combines mechanical strength and toughness with high permeability to small molecules and ions. This chain is Egg case collagen, found in Scyliorhinus canicula (Small-spotted catshark).